A 57-amino-acid polypeptide reads, in one-letter code: Phylloseptin-Az4 (57 aa).

An N-terminal signal peptide occupies residues 1-13; sequence LVLFLGLVSLSIC. A propeptide spanning residues 14-35 is cleaved from the precursor; the sequence is EEEKRETEEEENDQEEDDKSEE. Residues 16-35 are disordered; the sequence is EKRETEEEENDQEEDDKSEE. A compositionally biased stretch (acidic residues) spans 21 to 32; it reads EEEENDQEEDDK. Leu-56 is modified (leucine amide).

In terms of tissue distribution, expressed by the skin glands.

The protein resides in the secreted. Functionally, has antibacterial activity against the Gram-positive bacterium M.luteus ATCC 49732 (MIC=1.3 uM). Does not inhibit the growth of the fungus C.albicans. The chain is Phylloseptin-Az4 (psn12) from Pithecopus azureus (Orange-legged monkey tree frog).